The sequence spans 382 residues: ADP,ATP carrier protein, mitochondrial (382 aa).

The transit peptide at 1–71 directs the protein to the mitochondrion; that stretch reads MAEQANQPTV…PMMSSSPIFA (71 aa). Solcar repeat units lie at residues 80-173, 185-277, and 285-371; these read KNFM…FKRL, KWFG…LKPV, and DNFF…LQIL. Helical transmembrane passes span 82-109, 150-174, 183-203, 253-274, and 288-308; these read FMID…VKLL, TANV…KRLF, YWKW…SSLF, FNIS…YDSL, and FASF…SYPI. 2 residues coordinate ADP: R155 and K167. R312 is a binding site for ADP. The interval 312 to 317 is important for transport activity; the sequence is RRRMMM. The short motif at 312 to 317 is the Nucleotide carrier signature motif element; sequence RRRMMM. Residues 348-368 traverse the membrane as a helical segment; sequence AGANILRAIAGAGVLSGYDQL.

It belongs to the mitochondrial carrier (TC 2.A.29) family. In terms of assembly, monomer.

The protein resides in the mitochondrion inner membrane. It catalyses the reaction ADP(in) + ATP(out) = ADP(out) + ATP(in). With respect to regulation, the matrix-open state (m-state) is inhibited by the membrane-permeable bongkrekic acid (BKA). The cytoplasmic-open state (c-state) is inhibited by the membrane-impermeable toxic inhibitor carboxyatractyloside (CATR). Functionally, ADP:ATP antiporter that mediates import of ADP into the mitochondrial matrix for ATP synthesis, and export of ATP out to fuel the cell. Cycles between the cytoplasmic-open state (c-state) and the matrix-open state (m-state): operates by the alternating access mechanism with a single substrate-binding site intermittently exposed to either the cytosolic (c-state) or matrix (m-state) side of the inner mitochondrial membrane. In Oryza sativa subsp. japonica (Rice), this protein is ADP,ATP carrier protein, mitochondrial.